A 290-amino-acid chain; its full sequence is Pyridoxal kinase PdxY (290 aa).

Substrate-binding positions include Ser12 and 47–48 (TQ). Residues Asp114, Glu151, Lys184, and 211–214 (RPLL) each bind ATP. Asp225 is a binding site for substrate.

The protein belongs to the pyridoxine kinase family. PdxY subfamily. As to quaternary structure, homodimer. Mg(2+) is required as a cofactor.

The enzyme catalyses pyridoxal + ATP = pyridoxal 5'-phosphate + ADP + H(+). Its pathway is cofactor metabolism; pyridoxal 5'-phosphate salvage; pyridoxal 5'-phosphate from pyridoxal: step 1/1. In terms of biological role, pyridoxal kinase involved in the salvage pathway of pyridoxal 5'-phosphate (PLP). Catalyzes the phosphorylation of pyridoxal to PLP. In Pseudomonas fluorescens (strain Pf0-1), this protein is Pyridoxal kinase PdxY.